The chain runs to 1519 residues: MNKKFKYKKSLLAAILSATLLAGCDGGGSGSSSDTPPVDSGTGSLPEVKPDPTPNPEPTPEPTPDPEPTPEPIPDPEPTPEPEPEPVPTKTGYLTLGGSQRVTGATCNGESSDGFTFKPGEDVTCVAGNTTIATFNTQSEAARSLRAVEKVSFSLEDAQELAGSDDKKSNAVSLVTSSNSCPANTEQVCLTFSSVIESKRFDSLYKQIDLAPEEFKKLVNEEVENNAATDKAPSTHTSPVVPVTTPGTKPDLNASFVSANAEQFYQYQPTEIILSEGRLVDSQGYGVAGVNYYTNSGRGVTGENGEFSFSWGEAISFGIDTFELGSVRGNKSTIALTELGDEVRGANIDQLIHRYSTTGQNNTRVVPDDVRKVFAEYPNVINEIINLSLSNGATLGEGEQVVNLPNEFIEQFNTGQAKEIDTAICAKTDGCNEARWFSLTTRNVNDGQIQGVINKLWGVDTNYKSVSKFHVFHDSTNFYGSTGNARGQAVVNISNAAFPILMARNDKNYWLAFGEKRAWDKNELAYITEAPSIVRPENVTRETASFNLPFISLGQVGDGKLMVIGNPHYNSILRCPNGYSWNGGVNKDGQCTLNSDPDDMKNFMENVLRYLSNDRWLPDAKSSMTVGTNLETVYFKKHGQVLGNSAPFAFHKDFTGITVKPMTSYGNLNPDEVPLLILNGFEYVTQWGSDPYSIPLRADTSKPKLTQQDVTDLIAYMNKGGSVLIMENVMSNLKEESASGFVRLLDAAGLSMALNKSVVNNDPQGYPDRVRQRRSTPIWVYERYPAVDGKPPYTIDDTTKEVIWKYQQENKPDDKPKLEVASWQEEVEGKQVTQFAFIDEADHKTPESLAAAKQRILDAFPGLEVCKDSDYHYEVNCLEYRPGTDVPVTGGMYVPQYTQLDLSADTAKAMLQAADLGTNIQRLYQHELYFRTNGRQGERLNSVDLERLYQNMSVWLWNETKYRYEEGKEDELGFKTFTEFLNCYTNNAYVGTQCSAELKKSLIDNKMIYGEESSKAGMMNPSYPLNYMEKPLTRLMLGRSWWDLNIKVDVEKYPGVVNTNGETVTQNINLYSAPTKWFAGNMQSTGLWAPAQQEVSIESKSTVPVTVTVALADDLTGREKHEVSLNRPPRVTKTYDLKANDKVTFKVPYGGLIYIKGDSKEVQSADFTFTGVVKAPFYKDGKWQHDLNSPAPLGELESASFVYTTPKKNLNASNYTGGLEQFANDLDTFASSMNDFYGRDSEDGKHRMFTYKNLPGHKHRFANDVQISIGDAHSGYPVMNSSFSPNSTTLPTTPLNDWLIWHEVGHNAAETPLTVPGATEVANNVLALYMQDRYLGKMNRVADDITVAPEYLEESNGQAWARGGAGDRLLMYAQLKEWAEKNFDIKKWYPDGTPLPEFYSEREGMKGWNLFQLMHRKARGDEVSNDKFGGKNYCAESNGNAADTLMLCASWVAQTDLSEFFKKWNPGANAYQLPGASEMSFEGGVSQSAYNTLASLDLPKPEQGPETINQVTEHKMSAE.

Residues 1 to 23 (MNKKFKYKKSLLAAILSATLLAG) form the signal peptide. Disordered stretches follow at residues 22–107 (AGCD…GATC) and 226–247 (NAAT…TTPG). Cys24 carries the N-palmitoyl cysteine lipid modification. The S-diacylglycerol cysteine moiety is linked to residue Cys24. The span at 31-42 (SSSDTPPVDSGT) shows a compositional bias: low complexity. Over residues 51–77 (DPTPNPEPTPEPTPDPEPTPEPIPDPE) the composition is skewed to pro residues. Positions 97 to 107 (GGSQRVTGATC) are enriched in polar residues. The span at 234–247 (STHTSPVVPVTTPG) shows a compositional bias: low complexity. Residues 1080–1380 (GNMQSTGLWA…MYAQLKEWAE (301 aa)) enclose the Peptidase M60 domain. The interval 1497-1519 (DLPKPEQGPETINQVTEHKMSAE) is disordered.

It to V.cholerae AcfD (VC_0845).

The protein resides in the cell membrane. Functionally, may be a substrate of the type II secretion system beta (T2SS-beta). This is Putative lipoprotein YghJ (yghJ) from Escherichia coli O78:H11 (strain H10407 / ETEC).